A 104-amino-acid polypeptide reads, in one-letter code: MVTQLKSASEYDSALASGDKLVVVDFFATWCGPCKMIAPMIEKFAEQYSDAAFYKLDVDEVSDVAQKAEVSSMPTLIFYKGGKEVTRVVGANPAAIKQAIASNV.

Residues 2–104 form the Thioredoxin domain; the sequence is VTQLKSASEY…AIKQAIASNV (103 aa). Active-site nucleophile residues include Cys-31 and Cys-34. Cys-31 and Cys-34 are disulfide-bonded. The residue at position 62 (Ser-62) is a Phosphoserine. Glycyl lysine isopeptide (Lys-Gly) (interchain with G-Cter in ubiquitin) cross-links involve residues Lys-67 and Lys-97.

The protein belongs to the thioredoxin family. Monomer. Part of the heterodimeric LMA1 complex together with the proteinase inhibitor PBI2. LMA1 binds to the ATPase SEC18. Reversible disulfide bond formation between Cys-31 and Cys-34, reverted by thioredoxin reductase TRR1 using NADPH as hydrogen donor.

The protein localises to the cytoplasm. It is found in the golgi apparatus membrane. It localises to the nucleus. Its function is as follows. Participates as a hydrogen donor in redox reactions through the reversible oxidation of its active center dithiol to a disulfide, accompanied by the transfer of 2 electrons and 2 protons. It is involved in many cellular processes, including deoxyribonucleotide synthesis, repair of oxidatively damaged proteins, protein folding, sulfur metabolism, and redox homeostasis. Thioredoxin-dependent enzymes include phosphoadenosine-phosphosulfate reductase MET16, alkyl-hydroperoxide reductase DOT5, thioredoxin peroxidases TSA1 and TSA2, alkyl hydroperoxide reductase AHP1, and peroxiredoxin HYR1. Thioredoxin is also involved in protection against reducing stress. As part of the LMA1 complex, it is involved in the facilitation of vesicle fusion such as homotypic vacuole and ER-derived COPII vesicle fusion with the Golgi. This activity does not require the redox mechanism. Through its capacity to inactivate the stress response transcription factor YAP1 and its regulator the hydroperoxide stress sensor HYR1, it is involved in feedback regulation of stress response gene expression upon oxidative stress. The chain is Thioredoxin-2 (TRX2) from Saccharomyces cerevisiae (strain ATCC 204508 / S288c) (Baker's yeast).